A 338-amino-acid polypeptide reads, in one-letter code: uncharacterized protein (338 aa).

Positions methionine 1 to alanine 29 are cleaved as a signal peptide.

It belongs to the aerolysin family.

This is an uncharacterized protein from Staphylococcus aureus (strain bovine RF122 / ET3-1).